A 664-amino-acid chain; its full sequence is Sorbicillinoid biosynthetic cluster transcription factor sor3 (664 aa).

Positions 40 to 67 form a DNA-binding region, zn(2)-C6 fungal-type; that stretch reads CQSCRASKVKCDGGRPVCARCQKRGRAC. Positions 68 to 102 are disordered; sequence SYSQHDAASPRGRGRQRAKAPTRQPRPIRSRASVE.

The protein resides in the nucleus. Functionally, transcription factor that acts in concert with sor4 which is a transcriptional activator of the gene cluster that mediates the biosynthesis of sorbicillinoids, a diverse group of yellow secondary metabolites that restrict growth of competing pathogenic fungi but not of bacteria. Regulates the cluster genes in a light dependent manner. Also plays a direct or indirect role in regulation of paracelsin biosynthesis and cellulase gene expression. The chain is Sorbicillinoid biosynthetic cluster transcription factor sor3 from Hypocrea jecorina (strain QM6a) (Trichoderma reesei).